Here is a 469-residue protein sequence, read N- to C-terminus: Type II secretion system protein HxcR (469 aa).

Residue 246–253 participates in ATP binding; the sequence is GPTGSGKT.

It belongs to the GSP E family.

Its subcellular location is the cytoplasm. It carries out the reaction ATP + H2O + cellular proteinSide 1 = ADP + phosphate + cellular proteinSide 2.. ATPase component of the type II secretion system required for the energy-dependent secretion of extracellular factors from the periplasm. Acts as a molecular motor to provide the energy that is required for the export of proteins. The Hxc system is involved in the secretion of low-molecular-weight alkaline phosphatase L-AP (LapA). Is probably also involved in the secretion of the phosphate-binding protein PstS. This is Type II secretion system protein HxcR from Pseudomonas aeruginosa (strain ATCC 15692 / DSM 22644 / CIP 104116 / JCM 14847 / LMG 12228 / 1C / PRS 101 / PAO1).